A 305-amino-acid chain; its full sequence is Acetaldehyde dehydrogenase (305 aa).

13–16 (SGNI) is an NAD(+) binding site. Cysteine 128 (acyl-thioester intermediate) is an active-site residue. NAD(+)-binding positions include 159-167 (SAGPGTRQN) and asparagine 278.

This sequence belongs to the acetaldehyde dehydrogenase family.

The enzyme catalyses acetaldehyde + NAD(+) + CoA = acetyl-CoA + NADH + H(+). The chain is Acetaldehyde dehydrogenase from Roseiflexus castenholzii (strain DSM 13941 / HLO8).